Consider the following 1574-residue polypeptide: Myosin-2 (1574 aa).

Residue serine 2 is modified to N-acetylserine. The region spanning 4–57 (EVGTRCWYPHKELGWIGAEVIKNEFNDGKYHLELQLEDDEIVSVDTKDLNNDKD) is the Myosin N-terminal SH3-like domain. One can recognise a Myosin motor domain in the interval 70 to 781 (EATEDLTSLS…MLAYLEKLRS (712 aa)). ATP is bound at residue 164–171 (GESGAGKT). The interval 443 to 523 (FIGVLDIYGF…LGILSLLDEE (81 aa)) is actin-binding. 6 IQ domains span residues 784–806 (MHNS…QYLQ), 807–831 (ISQA…NDEM), 832–855 (KVNC…VFSV), 856–879 (LRTI…KQEH), 880–902 (EYNA…RFLR), and 903–932 (TKKD…DAKS). Positions 933–1088 (VNHLKEVSYK…RLQTAMSLGT (156 aa)) form a coiled coil. The tract at residues 1087–1574 (GTVTTSVLPQ…VAQQVVQDGH (488 aa)) is non alpha-helical, tail domain. At threonine 1097 the chain carries Phosphothreonine. Residue serine 1121 is modified to Phosphoserine. The 276-residue stretch at 1226-1501 (AQVLTTIQKV…LRYVADIVKK (276 aa)) folds into the Dilute domain.

The protein belongs to the TRAFAC class myosin-kinesin ATPase superfamily. Myosin family. As to quaternary structure, homodimer. Interacts with calmodulin (CMD1) and the myosin light chain MLC1 through its IQ repeats. Binds to the membrane receptors SEC4 and VAC17 to transport secretory vesicles and the vacuole, respectively. Binds to KAR9, which transports BIM1-coated cytoplasmic microtubules that are attached to the spindle pole body into the emerging bud, thereby correctly orienting the mitotic spindle. Interacts with YPT11 and MMR1 to accelerate mitochondrial distribution to the bud. Interacts with SHE4 and localizes it to the bud tip. Interacts with RHO3 and SMY1, putative regulators of MYO2 function. Interacts with SRO7.

It is found in the bud neck. Its subcellular location is the bud tip. Its function is as follows. Myosin heavy chain that is required for the cell cycle-regulated transport of various organelles and proteins for their segregation. Functions by binding with its tail domain to receptor proteins on organelles and exerting force with its N-terminal motor domain against actin filaments, thereby transporting its cargo along polarized actin cables. Essential for the delivery of secretory vesicles to sites of active growth during bud emergence and cytokinesis. Required for segregation and inheritance of peroxisomes, late Golgi compartments, mitochondria and the vacuole to the daughter cell during cell division. Also required for correct alignment of the spindle during mitosis. The chain is Myosin-2 (MYO2) from Saccharomyces cerevisiae (strain ATCC 204508 / S288c) (Baker's yeast).